A 288-amino-acid chain; its full sequence is MWPAIIQQLSEQLGKDFHLVEKEKVHGGDINECFMVSDGIDRYFVKTNQREYLTKFTAEVENLRVMRESNTVQVPEYILHGTSKTHAYLVLNYLATKPLDDAERSYEFGVQLANLHRWGEQKEFGFDIDNYIGATVQPNPWHKKWALFFAEQRIGWQLQLMQEKGVNLTNINEFVEMVKTRLANHSPRPSLLHGDLWFGNVANIVNGPLCFDPACYWGDRECDIALAEWFGGFQPEFFQGYESVWPLDWGYEERKDIYNLYHVLNHYNQFGGHYLDEAQKLIEKILSY.

92 to 94 contributes to the ATP binding site; it reads NYL. The Proton acceptor role is filled by Asp-195.

It belongs to the fructosamine kinase family.

Ketoamine kinase that phosphorylates ketoamines on the third carbon of the sugar moiety to generate ketoamine 3-phosphate. In Vibrio cholerae serotype O1 (strain ATCC 39315 / El Tor Inaba N16961), this protein is Probable ketoamine kinase VC_1539.